Here is a 379-residue protein sequence, read N- to C-terminus: DNA (cytosine-5)-methyltransferase (379 aa).

Residues 4 to 366 form the SAM-dependent MTase C5-type domain; the sequence is LRVLEFYSGI…KVLVSPNEEE (363 aa). The active site involves C78. A compositionally biased stretch (basic and acidic residues) spans 178-192; it reads KKEQDKHNEKVDENK. Positions 178–205 are disordered; sequence KKEQDKHNEKVDENKLNNNSNNNNEQNK. Positions 193-203 are enriched in low complexity; it reads LNNNSNNNNEQ.

This sequence belongs to the class I-like SAM-binding methyltransferase superfamily. C5-methyltransferase family.

It localises to the nucleus. The enzyme catalyses a 2'-deoxycytidine in DNA + S-adenosyl-L-methionine = a 5-methyl-2'-deoxycytidine in DNA + S-adenosyl-L-homocysteine + H(+). Involved in epigenetic gene silencing. Methylates specific cytosine residues in the retrotransposons DIRS-1 and Skipper. The polypeptide is DNA (cytosine-5)-methyltransferase (dnmA) (Dictyostelium discoideum (Social amoeba)).